We begin with the raw amino-acid sequence, 440 residues long: R3H and coiled-coil domain-containing protein 1 (440 aa).

In terms of domain architecture, R3H spans N16–D81. Residues T154–G225 form a disordered region. A compositionally biased stretch (basic and acidic residues) spans L157–E168. A Phosphoserine modification is found at S236. The stretch at L242–H300 forms a coiled coil. The interval L254–D276 is disordered. A compositionally biased stretch (acidic residues) spans E257–D276.

The polypeptide is R3H and coiled-coil domain-containing protein 1 (Homo sapiens (Human)).